The primary structure comprises 382 residues: Farnesyl diphosphate synthase (382 aa).

3 residues coordinate isopentenyl diphosphate: Lys-81, Arg-84, and Gln-120. Positions 127 and 131 each coordinate Mg(2+). Arg-136 serves as a coordination point for dimethylallyl diphosphate. Arg-137 contributes to the isopentenyl diphosphate binding site. Positions 230, 231, 270, 287, and 296 each coordinate dimethylallyl diphosphate.

It belongs to the FPP/GGPP synthase family. It depends on Mg(2+) as a cofactor.

It localises to the cytoplasm. The catalysed reaction is isopentenyl diphosphate + dimethylallyl diphosphate = (2E)-geranyl diphosphate + diphosphate. The enzyme catalyses isopentenyl diphosphate + (2E)-geranyl diphosphate = (2E,6E)-farnesyl diphosphate + diphosphate. It participates in isoprenoid biosynthesis; farnesyl diphosphate biosynthesis; farnesyl diphosphate from geranyl diphosphate and isopentenyl diphosphate: step 1/1. The protein operates within isoprenoid biosynthesis; geranyl diphosphate biosynthesis; geranyl diphosphate from dimethylallyl diphosphate and isopentenyl diphosphate: step 1/1. Its activity is regulated as follows. Inhibited by aminobisphosphonate drugs (aBP), such as risedronate and alendronate. Functionally, key enzyme in isoprenoid biosynthesis which catalyzes the formation of farnesyl diphosphate (FPP), a sterol precursor. Involved in the inhibition of cell growth. The polypeptide is Farnesyl diphosphate synthase (fps) (Dictyostelium discoideum (Social amoeba)).